Reading from the N-terminus, the 286-residue chain is Cytosolic 5'-nucleotidase 3 (286 aa).

Asp-38 acts as the Nucleophile in catalysis. 2 residues coordinate Mg(2+): Asp-38 and Asp-40. The active-site Proton donor is Asp-40. Substrate-binding positions include Glu-85, Ser-106, 153–154 (SA), and Lys-202. Asp-227 is a Mg(2+) binding site.

This sequence belongs to the pyrimidine 5'-nucleotidase family.

It is found in the cytoplasm. The enzyme catalyses a ribonucleoside 5'-phosphate + H2O = a ribonucleoside + phosphate. Its function is as follows. Can act both as nucleotidase and as phosphotransferase. The sequence is that of Cytosolic 5'-nucleotidase 3 (nt5c3) from Danio rerio (Zebrafish).